The following is a 1317-amino-acid chain: Toxin protein Tse5 (1317 aa).

The interval 395–419 (GRETRRRRDGQGRMLEEESPGKARY) is disordered. Over residues 403 to 415 (DGQGRMLEEESPG) the composition is skewed to basic and acidic residues.

Toxin secreted by the H1 type VI (H1-T6SS) secretion system that acts on bacterial target cells. The producing bacterium is protected by a cognate immunity protein. The polypeptide is Toxin protein Tse5 (Pseudomonas aeruginosa (strain ATCC 15692 / DSM 22644 / CIP 104116 / JCM 14847 / LMG 12228 / 1C / PRS 101 / PAO1)).